The primary structure comprises 153 residues: Ribonuclease 2 (153 aa).

Belongs to the BetVI family.

Its subcellular location is the cytoplasm. Functionally, catalyzes the two-stage endonucleolytic cleavage to 3'-phosphomononucleotides and 3'-phosphooligonucleotides with 2',3'-cyclic phosphate intermediates. The polypeptide is Ribonuclease 2 (Panax ginseng (Korean ginseng)).